The primary structure comprises 406 residues: Eukaryotic initiation factor 4A-I (406 aa).

The disordered stretch occupies residues 1 to 21 (MSASQDSRSRDNGPDGMEPEG). N-acetylserine is present on serine 2. Serine 4 is subject to Phosphoserine. Positions 32-60 (DSLDDMNLSESLLRGIYAYGFEKPSAIQQ) match the Q motif motif. Residues 63–234 (ILSCIKGYDV…KKFMRDPIRI (172 aa)) form the Helicase ATP-binding domain. Residue 76–83 (AQSGTGKT) coordinates ATP. Lysine 118 carries the post-translational modification N6-acetyllysine. A Glycyl lysine isopeptide (Lys-Gly) (interchain with G-Cter in SUMO2) cross-link involves residue lysine 146. Threonine 158 carries the phosphothreonine modification. Position 174 is an N6-acetyllysine (lysine 174). A DEAD box motif is present at residues 182-185 (DEAD). An N6-acetyllysine modification is found at lysine 193. Lysine 225 participates in a covalent cross-link: Glycyl lysine isopeptide (Lys-Gly) (interchain with G-Cter in SUMO2). Residue lysine 238 is modified to N6-acetyllysine; alternate. A Glycyl lysine isopeptide (Lys-Gly) (interchain with G-Cter in SUMO2); alternate cross-link involves residue lysine 238. One can recognise a Helicase C-terminal domain in the interval 245 to 406 (GIRQFYINVE…EMPLNVADLI (162 aa)). Glycyl lysine isopeptide (Lys-Gly) (interchain with G-Cter in SUMO2) cross-links involve residues lysine 309, lysine 369, and lysine 381.

It belongs to the DEAD box helicase family. eIF4A subfamily. As to quaternary structure, eIF4F is a multi-subunit complex, the composition of which varies with external and internal environmental conditions. It is composed of at least EIF4A, EIF4E and EIF4G1/EIF4G3. Interacts with PAIP1, EIF4E and UPF2. Found in a complex with XPO7, EIF4A1, ARHGAP1, VPS26A, VPS29, VPS35 and SFN. May interact with NOM1. Interacts with PDCD4; this interferes with the interaction between EIF4A and EIF4G. Interacts with RBM4. Interacts with DDX3X in an RNA-independent manner. Interacts with PKP1 (via N-terminus); the interaction promotes EIF4A1 recruitment to the cap-dependent translation complex and EIF4A1 ATPase activity.

It is found in the cytoplasm. The protein localises to the perinuclear region. The protein resides in the cell membrane. Its subcellular location is the stress granule. It catalyses the reaction ATP + H2O = ADP + phosphate + H(+). Its function is as follows. ATP-dependent RNA helicase which is a subunit of the eIF4F complex involved in cap recognition and is required for mRNA binding to ribosome. In the current model of translation initiation, eIF4A unwinds RNA secondary structures in the 5'-UTR of mRNAs which is necessary to allow efficient binding of the small ribosomal subunit, and subsequent scanning for the initiator codon. As a result, promotes cell proliferation and growth. This chain is Eukaryotic initiation factor 4A-I (EIF4A1), found in Pongo abelii (Sumatran orangutan).